The sequence spans 79 residues: Acyl carrier protein (79 aa).

The Carrier domain maps to 1–76 (MSLEDDVIAI…DVFTYIKKRQ (76 aa)). S36 carries the post-translational modification O-(pantetheine 4'-phosphoryl)serine.

It belongs to the acyl carrier protein (ACP) family. In terms of processing, 4'-phosphopantetheine is transferred from CoA to a specific serine of apo-ACP by AcpS. This modification is essential for activity because fatty acids are bound in thioester linkage to the sulfhydryl of the prosthetic group.

It localises to the cytoplasm. Its pathway is lipid metabolism; fatty acid biosynthesis. Its function is as follows. Carrier of the growing fatty acid chain in fatty acid biosynthesis. This Chlamydia pneumoniae (Chlamydophila pneumoniae) protein is Acyl carrier protein.